The sequence spans 58 residues: uncharacterized protein (58 aa).

A helical transmembrane segment spans residues 12-32; the sequence is VALVYISVYFFSCISLIVYFF.

The protein localises to the membrane. This is an uncharacterized protein from Saccharomyces cerevisiae (strain ATCC 204508 / S288c) (Baker's yeast).